We begin with the raw amino-acid sequence, 29 residues long: Varv peptide F (29 aa).

The segment at residues 1-29 (GVPICGETCTLGTCYTAGCSCSWPVCTRN) is a cross-link (cyclopeptide (Gly-Asn)). Cystine bridges form between Cys-5/Cys-19, Cys-9/Cys-21, and Cys-14/Cys-26.

In terms of processing, this is a cyclic peptide.

Its function is as follows. Probably participates in a plant defense mechanism. Has cytotoxic activity against a variety of drug-resistant and drug-sensitive human tumor cell lines. The polypeptide is Varv peptide F (Viola arvensis (European field pansy)).